The sequence spans 301 residues: GTPase Era (301 aa).

An Era-type G domain is found at 6–173 (KSGFVAIVGR…LEQTNANLEI (168 aa)). The interval 14–21 (GRPNVGKS) is G1. A GTP-binding site is contributed by 14–21 (GRPNVGKS). Positions 40-44 (QTTRN) are G2. A G3 region spans residues 61-64 (DTPG). GTP contacts are provided by residues 61–65 (DTPGI) and 123–126 (NKID). Residues 123-126 (NKID) are G4. Residues 152–154 (ISA) form a G5 region. The KH type-2 domain maps to 204-282 (TREEVPHSVA…FLEIWVKVQK (79 aa)).

The protein belongs to the TRAFAC class TrmE-Era-EngA-EngB-Septin-like GTPase superfamily. Era GTPase family. As to quaternary structure, monomer.

Its subcellular location is the cytoplasm. It is found in the cell membrane. Functionally, an essential GTPase that binds both GDP and GTP, with rapid nucleotide exchange. Plays a role in 16S rRNA processing and 30S ribosomal subunit biogenesis and possibly also in cell cycle regulation and energy metabolism. This chain is GTPase Era, found in Listeria welshimeri serovar 6b (strain ATCC 35897 / DSM 20650 / CCUG 15529 / CIP 8149 / NCTC 11857 / SLCC 5334 / V8).